The primary structure comprises 394 residues: Choline/ethanolamine kinase (394 aa).

Position 2 is an N-acetylalanine (A2). Positions 22–42 (GLLDAKCPEPIPNRRRSSSLS) are disordered. ATP contacts are provided by residues 75–81 (SGGLSNL), R104, 146–152 (QYLPSRP), Q244, and D264. Residue 77–79 (GLS) coordinates substrate.

This sequence belongs to the choline/ethanolamine kinase family. Homodimer, and heterodimer with CHKA.

The enzyme catalyses choline + ATP = phosphocholine + ADP + H(+). The catalysed reaction is ethanolamine + ATP = phosphoethanolamine + ADP + H(+). The protein operates within phospholipid metabolism; phosphatidylethanolamine biosynthesis; phosphatidylethanolamine from ethanolamine: step 1/3. Its function is as follows. Has a key role in phospholipid metabolism, and catalyzes the first step of phosphatidylethanolamine and phosphatidylcholine biosynthesis. In Rattus norvegicus (Rat), this protein is Choline/ethanolamine kinase (Chkb).